Consider the following 71-residue polypeptide: Sec-independent protein translocase protein TatA (71 aa).

A helical membrane pass occupies residues 1–21 (MGSFSMGHWLIVLAIIVLLFG). Residues 41 to 57 (KEMEDETPVEKIEKADS) are compositionally biased toward basic and acidic residues. A disordered region spans residues 41–71 (KEMEDETPVEKIEKADSETQSTKQNETTKNV). A compositionally biased stretch (polar residues) spans 58 to 71 (ETQSTKQNETTKNV).

The protein belongs to the TatA/E family. The Tat system comprises two distinct complexes: a TatABC complex, containing multiple copies of TatA, TatB and TatC subunits, and a separate TatA complex, containing only TatA subunits. Substrates initially bind to the TatABC complex, which probably triggers association of the separate TatA complex to form the active translocon.

Its subcellular location is the cell inner membrane. In terms of biological role, part of the twin-arginine translocation (Tat) system that transports large folded proteins containing a characteristic twin-arginine motif in their signal peptide across membranes. TatA could form the protein-conducting channel of the Tat system. In Campylobacter fetus subsp. fetus (strain 82-40), this protein is Sec-independent protein translocase protein TatA.